We begin with the raw amino-acid sequence, 455 residues long: MALWGGRFQGETSALFKLFNDSLPVDYRLFEQDVIGSIAWADAIASVGIISATECRDLKKALNDLLVEVNGDPAIILASGAEDIHSFVESALIAKVGDLGKKLHTGRSRNDQVATDLKLWCQSEGAALLARLQSLHAELLALAEREFDAVMPGYTHLQRAQPVTFGHWCLAYVEMYERDISRLADALTRANTCPLGSGALAGTAYKMDRHALAAALNFAAPTLNSLDSVSDRDHVVELCSTASISMMHLSRMAEDLIFFNSGEANFISLSDEVTSGSSLMPQKKNPDALELIRGKTGRVYGSLVGILTTMKALPLAYNKDMQEDKEGLFDVVDSWAICLDMAALVLSGLKVNRPNALLAAQQGYANSTELADYLVSKGMPFREAHHVVGEVVVAAIAKQIPLEEFSLAELKTFAAIIEDDVYPNLTIEACLAKRDVLGGTALPQIQQAIAAKKAR.

This sequence belongs to the lyase 1 family. Argininosuccinate lyase subfamily.

Its subcellular location is the cytoplasm. The catalysed reaction is 2-(N(omega)-L-arginino)succinate = fumarate + L-arginine. The protein operates within amino-acid biosynthesis; L-arginine biosynthesis; L-arginine from L-ornithine and carbamoyl phosphate: step 3/3. The protein is Argininosuccinate lyase of Shewanella baltica (strain OS223).